Reading from the N-terminus, the 531-residue chain is Chaperonin GroEL, chloroplastic (531 aa).

Residues 30–33 (TLGP), 87–91 (DGTTT), glycine 415, 481–483 (NAA), and aspartate 497 each bind ATP.

Belongs to the chaperonin (HSP60) family. Forms a cylinder of 14 subunits composed of two heptameric rings stacked back-to-back. Interacts with the co-chaperonin GroES.

Its subcellular location is the plastid. The protein resides in the chloroplast. The enzyme catalyses ATP + H2O + a folded polypeptide = ADP + phosphate + an unfolded polypeptide.. Functionally, together with its co-chaperonin GroES, plays an essential role in assisting protein folding. The GroEL-GroES system forms a nano-cage that allows encapsulation of the non-native substrate proteins and provides a physical environment optimized to promote and accelerate protein folding. In Emiliania huxleyi (Coccolithophore), this protein is Chaperonin GroEL, chloroplastic.